We begin with the raw amino-acid sequence, 330 residues long: Phosphate acyltransferase (330 aa).

It belongs to the PlsX family. Homodimer. Probably interacts with PlsY.

Its subcellular location is the cytoplasm. It carries out the reaction a fatty acyl-[ACP] + phosphate = an acyl phosphate + holo-[ACP]. It functions in the pathway lipid metabolism; phospholipid metabolism. In terms of biological role, catalyzes the reversible formation of acyl-phosphate (acyl-PO(4)) from acyl-[acyl-carrier-protein] (acyl-ACP). This enzyme utilizes acyl-ACP as fatty acyl donor, but not acyl-CoA. The chain is Phosphate acyltransferase from Bacillus cereus (strain G9842).